We begin with the raw amino-acid sequence, 179 residues long: Bifunctional protein PyrR (179 aa).

A PRPP-binding motif is present at residues 100–112; sequence VILIDDVLFTGRT.

The protein belongs to the purine/pyrimidine phosphoribosyltransferase family. PyrR subfamily.

It carries out the reaction UMP + diphosphate = 5-phospho-alpha-D-ribose 1-diphosphate + uracil. Regulates the transcription of the pyrimidine nucleotide (pyr) operon in response to exogenous pyrimidines. Functionally, also displays a weak uracil phosphoribosyltransferase activity which is not physiologically significant. The chain is Bifunctional protein PyrR from Mannheimia succiniciproducens (strain KCTC 0769BP / MBEL55E).